The chain runs to 360 residues: Peptide chain release factor 1 (360 aa).

Residue Gln235 is modified to N5-methylglutamine. The segment at 281–310 (AERQRQDAAQAESRRLQVGSGDRSQRIRTY) is disordered.

This sequence belongs to the prokaryotic/mitochondrial release factor family. Methylated by PrmC. Methylation increases the termination efficiency of RF1.

The protein resides in the cytoplasm. Its function is as follows. Peptide chain release factor 1 directs the termination of translation in response to the peptide chain termination codons UAG and UAA. The sequence is that of Peptide chain release factor 1 from Stenotrophomonas maltophilia (strain K279a).